The chain runs to 96 residues: SAGA complex subunit SUS1 (96 aa).

K68 is covalently cross-linked (Glycyl lysine isopeptide (Lys-Gly) (interchain with G-Cter in ubiquitin)).

It belongs to the ENY2 family. Component of the 1.8 MDa SAGA (Spt-Ada-Gcn5 acetyltransferase) complex, which is composed of 19 subunits TRA1, SPT7, TAF5, NGG1/ADA3, SGF73, SPT20/ADA5, SPT8, TAF12, TAF6, HFI1/ADA1, UBP8, GCN5, ADA2, SPT3, SGF29, TAF10, TAF9, SGF11 and SUS1. The SAGA complex is composed of 4 modules, namely the HAT (histone acetyltransferase) module (GCN5, ADA2, NGG1/ADA3 and SGF29), the DUB (deubiquitinating) module (UBP8, SGF11, SGF73 and SUS1), the core or TAF (TBP-associated factor) module (TAF5, TAF6, TAF9, TAF10 and TAF12), and the Tra1 or SPT (Suppressor of Ty) module (TRA1, HFI1/ADA1, SPT3, SPT7, SPT8 and SPT20/ADA5). The Tra1/SPT module binds activators, the core module recruits TBP (TATA-binding protein), the HAT module contains the histone H3 acetyltransferase GCN5, and the DUB module comprises the histone H2B deubiquitinase UBP8. Also identified in an altered form of SAGA, named SALSA (SAGA altered, Spt8 absent) or SLIK (SAGA-like) complex, which contains a C-terminal truncated form of SPT7 and is missing SPT8. However, it has been shown that the SAGA and SAGA-like SALSA/SLIK transcriptional coactivators are structurally and biochemically equivalent. Component of the nuclear pore complex (NPC)-associated TREX-2 complex (transcription and export complex 2), composed of at least SUS1, SAC3, THP1, SEM1, and CDC31. TREX-2 contains 2 SUS1 chains. The TREX-2 complex interacts with the mRNA export factors MEX67, MTR2 and SUB2, and the nucleoporin NUP1. Interacts directly with THP1, SAC3. Interacts directly with SGF11 and UBP8. Interacts with YRA1, MEX67 and with the RNA polymerase II.

It is found in the nucleus. The protein localises to the nucleoplasm. It localises to the cytoplasm. The protein resides in the P-body. Its function is as follows. Involved in mRNA export coupled transcription activation by association with both the TREX-2 and the SAGA complexes. SAGA acts as a general cofactor required for essentially all RNA polymerase II transcription. At the promoters, SAGA is required for transcription pre-initiation complex (PIC) recruitment. It influences RNA polymerase II transcriptional activity through different activities such as TBP interaction (via core/TAF module) and promoter selectivity, interaction with transcription activators (via Tra1/SPT module), and chromatin modification through histone acetylation (via HAT module) and deubiquitination (via DUB module). SAGA preferentially acetylates histones H3 (to form H3K9ac, H3K14ac, H3K18ac and H3K23ac) and H2B and deubiquitinates histone H2B. SAGA interacts with DNA via upstream activating sequences (UASs). Also identified in a modified version of SAGA named SALSA or SLIK. The cleavage of SPT7 and the absence of the SPT8 subunit in SLIK neither drive any major conformational differences in its structure compared with SAGA, nor significantly affect HAT, DUB, or DNA-binding activities. Within the SAGA complex, participates in a subcomplex with SGF11, SGF73 and UBP8 required for deubiquitination of H2B and for the maintenance of steady-state H3 methylation levels. The TREX-2 complex functions in docking export-competent ribonucleoprotein particles (mRNPs) to the nuclear entrance of the nuclear pore complex (nuclear basket), by association with components of the nuclear mRNA export machinery (MEX67-MTR2 and SUB2) in the nucleoplasm and the nucleoporin NUP1 at the nuclear basket. TREX-2 participates in mRNA export and accurate chromatin positioning in the nucleus by tethering genes to the nuclear periphery. SUS1 also has a role in mRNP biogenesis and maintenance of genome integrity through preventing RNA-mediated genome instability. Has a role in response to DNA damage induced by methyl methane sulfonate (MMS) and replication arrest induced by hydroxyurea. May also be involved in cytoplasmic mRNA decay by interaction with components of P-bodies. This chain is SAGA complex subunit SUS1, found in Saccharomyces cerevisiae (strain ATCC 204508 / S288c) (Baker's yeast).